The chain runs to 413 residues: Argininosuccinate synthase (413 aa).

8–16 (AYSGGLDTS) contributes to the ATP binding site. Tyrosine 87 serves as a coordination point for L-citrulline. Glycine 117 lines the ATP pocket. Threonine 119, asparagine 123, and aspartate 124 together coordinate L-aspartate. Asparagine 123 is an L-citrulline binding site. 4 residues coordinate L-citrulline: arginine 127, serine 175, glutamate 259, and tyrosine 271.

Belongs to the argininosuccinate synthase family. Type 1 subfamily. In terms of assembly, homotetramer.

It localises to the cytoplasm. The enzyme catalyses L-citrulline + L-aspartate + ATP = 2-(N(omega)-L-arginino)succinate + AMP + diphosphate + H(+). The protein operates within amino-acid biosynthesis; L-arginine biosynthesis; L-arginine from L-ornithine and carbamoyl phosphate: step 2/3. In Micrococcus luteus (strain ATCC 4698 / DSM 20030 / JCM 1464 / CCM 169 / CCUG 5858 / IAM 1056 / NBRC 3333 / NCIMB 9278 / NCTC 2665 / VKM Ac-2230) (Micrococcus lysodeikticus), this protein is Argininosuccinate synthase.